We begin with the raw amino-acid sequence, 192 residues long: Peptidyl-tRNA hydrolase (192 aa).

Y17 contacts tRNA. The Proton acceptor role is filled by H22. The tRNA site is built by F67, N69, and N115.

The protein belongs to the PTH family. As to quaternary structure, monomer.

It is found in the cytoplasm. The catalysed reaction is an N-acyl-L-alpha-aminoacyl-tRNA + H2O = an N-acyl-L-amino acid + a tRNA + H(+). Hydrolyzes ribosome-free peptidyl-tRNAs (with 1 or more amino acids incorporated), which drop off the ribosome during protein synthesis, or as a result of ribosome stalling. In terms of biological role, catalyzes the release of premature peptidyl moieties from peptidyl-tRNA molecules trapped in stalled 50S ribosomal subunits, and thus maintains levels of free tRNAs and 50S ribosomes. The sequence is that of Peptidyl-tRNA hydrolase from Methylobacillus flagellatus (strain ATCC 51484 / DSM 6875 / VKM B-1610 / KT).